The chain runs to 434 residues: CinA-like protein (434 aa).

Belongs to the CinA family.

This Mycolicibacterium paratuberculosis (strain ATCC BAA-968 / K-10) (Mycobacterium paratuberculosis) protein is CinA-like protein.